We begin with the raw amino-acid sequence, 225 residues long: MASSSLFLLASLLVLASWQQAIAFDPSPLQDFCVADMASPVRVNGFPCKNPMNVTSDDFFNAAKFDMPRNTMNKVGSNVTNLNVINFPGLNTLGISLARIDYAPMGVNPPHVHPRATELLTVLEGTLYVGFVTSNPNRLFSKVVHKGDVFVFPKAMIHFQMNLDHNKPAVAQSALSSQNPGVITIASAIFGSTPPISDDVLVKAFQVEKKVIDWLKSQFSENNHY.

The first 23 residues, 1 to 23 (MASSSLFLLASLLVLASWQQAIA), serve as a signal peptide directing secretion. The cysteines at positions 33 and 48 are disulfide-linked. N-linked (GlcNAc...) asparagine glycans are attached at residues Asn-53 and Asn-78. The Cupin type-1 domain maps to 60-213 (FNAAKFDMPR…AFQVEKKVID (154 aa)). Residues His-111, His-113, Glu-118, and His-158 each contribute to the Mn(2+) site.

This sequence belongs to the germin family. In terms of assembly, oligomer (believed to be a pentamer but probably hexamer).

The protein resides in the secreted. It is found in the extracellular space. Its subcellular location is the apoplast. Plays a role in broad-spectrum disease resistance. Probably has no oxalate oxidase activity even if the active site is conserved. This is Germin-like protein 8-3 (GER2) from Oryza sativa subsp. japonica (Rice).